Reading from the N-terminus, the 881-residue chain is Phosphoenolpyruvate carboxylase (881 aa).

Catalysis depends on residues His-142 and Lys-547.

Belongs to the PEPCase type 1 family. Mg(2+) is required as a cofactor.

It catalyses the reaction oxaloacetate + phosphate = phosphoenolpyruvate + hydrogencarbonate. Forms oxaloacetate, a four-carbon dicarboxylic acid source for the tricarboxylic acid cycle. The protein is Phosphoenolpyruvate carboxylase of Hahella chejuensis (strain KCTC 2396).